A 266-amino-acid polypeptide reads, in one-letter code: 4-hydroxy-tetrahydrodipicolinate reductase (266 aa).

10–15 (GPRGRM) provides a ligand contact to NAD(+). K38 contacts NADP(+). NAD(+)-binding positions include 99–101 (GTT) and 125–128 (APNF). H155 (proton donor/acceptor) is an active-site residue. H156 serves as a coordination point for (S)-2,3,4,5-tetrahydrodipicolinate. K159 (proton donor) is an active-site residue. Residue 165-166 (GT) participates in (S)-2,3,4,5-tetrahydrodipicolinate binding.

This sequence belongs to the DapB family.

It is found in the cytoplasm. It catalyses the reaction (S)-2,3,4,5-tetrahydrodipicolinate + NAD(+) + H2O = (2S,4S)-4-hydroxy-2,3,4,5-tetrahydrodipicolinate + NADH + H(+). The enzyme catalyses (S)-2,3,4,5-tetrahydrodipicolinate + NADP(+) + H2O = (2S,4S)-4-hydroxy-2,3,4,5-tetrahydrodipicolinate + NADPH + H(+). Its pathway is amino-acid biosynthesis; L-lysine biosynthesis via DAP pathway; (S)-tetrahydrodipicolinate from L-aspartate: step 4/4. In terms of biological role, catalyzes the conversion of 4-hydroxy-tetrahydrodipicolinate (HTPA) to tetrahydrodipicolinate. The sequence is that of 4-hydroxy-tetrahydrodipicolinate reductase from Bacillus anthracis (strain A0248).